We begin with the raw amino-acid sequence, 431 residues long: UDP-N-acetylmuramate--L-alanine ligase (431 aa).

ATP is bound at residue 108 to 114; sequence GAHGKST.

Belongs to the MurCDEF family.

The protein localises to the cytoplasm. It carries out the reaction UDP-N-acetyl-alpha-D-muramate + L-alanine + ATP = UDP-N-acetyl-alpha-D-muramoyl-L-alanine + ADP + phosphate + H(+). It functions in the pathway cell wall biogenesis; peptidoglycan biosynthesis. In terms of biological role, cell wall formation. This Campylobacter jejuni subsp. jejuni serotype O:23/36 (strain 81-176) protein is UDP-N-acetylmuramate--L-alanine ligase.